A 1822-amino-acid chain; its full sequence is Integrin beta-4 (1822 aa).

The first 27 residues, methionine 1–alanine 27, serve as a signal peptide directing secretion. Over asparagine 28–serine 710 the chain is Extracellular. The PSI domain occupies arginine 29–glutamine 73. 8 disulfide bridges follow: cysteine 30–cysteine 48, cysteine 38–cysteine 455, cysteine 41–cysteine 61, cysteine 51–cysteine 72, cysteine 245–cysteine 288, cysteine 457–cysteine 476, cysteine 468–cysteine 479, and cysteine 481–cysteine 490. A VWFA domain is found at aspartate 131–serine 329. 2 residues coordinate Mg(2+): serine 139 and serine 141. The Ca(2+) site is built by serine 141, aspartate 144, aspartate 145, and aspartate 176. Positions tryptophan 194–proline 199 are involved in NRG1- and IGF1-binding. Ca(2+)-binding residues include asparagine 228, aspartate 230, proline 232, and glutamate 233. Glutamate 233 provides a ligand contact to Mg(2+). N-linked (GlcNAc...) asparagine glycosylation occurs at asparagine 327. Glutamate 350 contributes to the Ca(2+) binding site. I-EGF domains follow at residues cysteine 457 to asparagine 491, cysteine 492 to glutamate 537, tyrosine 538 to aspartate 574, and cysteine 575 to glutamate 615. The N-linked (GlcNAc...) asparagine glycan is linked to asparagine 491. 11 disulfides stabilise this stretch: cysteine 492/cysteine 520, cysteine 503/cysteine 518, cysteine 512/cysteine 523, cysteine 525/cysteine 536, cysteine 543/cysteine 557, cysteine 551/cysteine 562, cysteine 564/cysteine 573, cysteine 575/cysteine 598, cysteine 582/cysteine 596, cysteine 590/cysteine 601, and cysteine 603/cysteine 614. Asparagine 579 carries N-linked (GlcNAc...) asparagine glycosylation. N-linked (GlcNAc...) asparagine glycosylation is present at asparagine 617. Intrachain disulfides connect cysteine 626-cysteine 671, cysteine 632-cysteine 651, cysteine 635-cysteine 648, and cysteine 680-cysteine 706. The N-linked (GlcNAc...) asparagine glycan is linked to asparagine 695. A helical membrane pass occupies residues phenylalanine 711–tryptophan 733. The tract at residues cysteine 732–cysteine 749 is palmitoylated on several cysteines. The Cytoplasmic portion of the chain corresponds to lysine 734–threonine 1822. A phosphoserine mark is found at serine 771, serine 1069, and serine 1119. A Calx-beta domain is found at valine 979–serine 1084. The disordered stretch occupies residues threonine 1113 to serine 1140. Fibronectin type-III domains are found at residues alanine 1129–glutamate 1218 and glutamate 1222–lysine 1321. The segment at leucine 1400–asparagine 1444 is disordered. The span at aspartate 1418 to glycine 1427 shows a compositional bias: gly residues. Serine 1454, serine 1457, and serine 1474 each carry phosphoserine. A Phosphothreonine modification is found at threonine 1487. Phosphoserine is present on serine 1494. Residues leucine 1495–alanine 1525 form a disordered region. Polar residues predominate over residues serine 1503 to serine 1518. Threonine 1530 is subject to Phosphothreonine. Fibronectin type-III domains follow at residues threonine 1530–glutamine 1625 and alanine 1643–glycine 1739. The residue at position 1791 (serine 1791) is a Phosphoserine.

It belongs to the integrin beta chain family. Heterodimer of an alpha and a beta subunit. Beta-4 associates with alpha-6. Interacts (via cytoplasmic region) with COL17A1 (via cytoplasmic region). Interacts (via cytoplasmic region) with DST isoform 3 (via N-terminus). Isoform beta-4a interacts (via cytoplasmic domain) with DST (via N-terminus). Interacts with RAC1. ITGA6:ITGB4 is found in a ternary complex with NRG1 and ERBB3. ITGA6:ITGB4 is found in a ternary complex with IGF1 and IGF1R. ITGA6:ITGB4 interacts with IGF2. Interacts with TMEM268; this interaction prevents ITGB4 degradation. Palmitoylated by DHHC3 at several cysteines of the membrane-proximal region, enhancing stability and cell surface expression. Palmitoylation also promotes secondary association with tertaspanins. In terms of tissue distribution, integrin alpha-6/beta-4 is predominantly expressed by epithelia. Isoform beta-4D is also expressed in colon and placenta. Isoform beta-4E is also expressed in epidermis, lung, duodenum, heart, spleen and stomach.

Its subcellular location is the cell membrane. The protein resides in the cell junction. It localises to the hemidesmosome. Functionally, integrin alpha-6/beta-4 is a receptor for laminin. Plays a critical structural role in the hemidesmosome of epithelial cells. Is required for the regulation of keratinocyte polarity and motility. ITGA6:ITGB4 binds to NRG1 (via EGF domain) and this binding is essential for NRG1-ERBB signaling. ITGA6:ITGB4 binds to IGF1 and this binding is essential for IGF1 signaling. ITGA6:ITGB4 binds to IGF2 and this binding is essential for IGF2 signaling. This is Integrin beta-4 (ITGB4) from Homo sapiens (Human).